A 188-amino-acid chain; its full sequence is Threonylcarbamoyl-AMP synthase (188 aa).

Residues 3 to 188 enclose the YrdC-like domain; that stretch reads QLHPSDIKDV…RSGKILRNGQ (186 aa).

This sequence belongs to the SUA5 family. TsaC subfamily.

It localises to the cytoplasm. The catalysed reaction is L-threonine + hydrogencarbonate + ATP = L-threonylcarbamoyladenylate + diphosphate + H2O. Its function is as follows. Required for the formation of a threonylcarbamoyl group on adenosine at position 37 (t(6)A37) in tRNAs that read codons beginning with adenine. Catalyzes the conversion of L-threonine, HCO(3)(-)/CO(2) and ATP to give threonylcarbamoyl-AMP (TC-AMP) as the acyladenylate intermediate, with the release of diphosphate. The polypeptide is Threonylcarbamoyl-AMP synthase (Shewanella oneidensis (strain ATCC 700550 / JCM 31522 / CIP 106686 / LMG 19005 / NCIMB 14063 / MR-1)).